The sequence spans 291 residues: MIQIFFLGTGAGSPSKKRKLPAFLVRREGLNILLDCGEGTQYTLMNNKLGINSIKIIGITHMHGDHVFGLLGVIASMGLLDRKETLYILGPRDLKDFLYTSFEYSKFNPSFKIEFIDNYNDQNITIATFKTCHTVESQGYLISERDRVKIDEEKLEKEKIKDWRVMRKLKEGKTVEYNGKFLKPEDYLVIKRGLKVAYTGDTIPCQSVIESVKGVDLLIHDSTFLNEPSACTYGHSNVADAAKVALEASVKLLALTHISPRYEDVTEHLKVARRIFPKSILPDDLSYITLK.

Positions 61, 63, 65, 66, 133, 201, and 257 each coordinate Zn(2+). The Proton acceptor role is filled by Asp65.

Belongs to the RNase Z family. Homodimer. Zn(2+) serves as cofactor.

The catalysed reaction is Endonucleolytic cleavage of RNA, removing extra 3' nucleotides from tRNA precursor, generating 3' termini of tRNAs. A 3'-hydroxy group is left at the tRNA terminus and a 5'-phosphoryl group is left at the trailer molecule.. Its function is as follows. Zinc phosphodiesterase, which displays some tRNA 3'-processing endonuclease activity. Probably involved in tRNA maturation, by removing a 3'-trailer from precursor tRNA. The polypeptide is Ribonuclease Z (Saccharolobus islandicus (strain M.16.27) (Sulfolobus islandicus)).